We begin with the raw amino-acid sequence, 259 residues long: MVLAGRGMPGTKECLICLTALLLAAAAAAMINGVLDAKLDARMARLHRRVASLERIGAQRATVAAAGMLFAALALSITFLPRLTTALILLAIFSYTPLYTLWFKRRSPWGVVPGGIPGALPVLVGASAVSGTISSAPLILFLVMLLWQPPHFWALALKHQDDYRRAGVPTLPLVRGEAYTKVCIFVFAALLLPASLALWFTGACSARFAIEALCLGFFNLFSCYLYLVKNRRFQRAFQASIFYLLGLLSAVIIDICSRP.

8 helical membrane passes run 15 to 35 (LICL…NGVL), 61 to 81 (ATVA…TFLP), 83 to 103 (LTTA…TLWF), 109 to 129 (WGVV…ASAV), 137 to 157 (PLIL…ALAL), 182 to 202 (VCIF…WFTG), 208 to 228 (FAIE…LYLV), and 236 to 256 (AFQA…IDIC).

It belongs to the UbiA prenyltransferase family. Protoheme IX farnesyltransferase subfamily.

The protein localises to the cell inner membrane. The enzyme catalyses heme b + (2E,6E)-farnesyl diphosphate + H2O = Fe(II)-heme o + diphosphate. Its pathway is porphyrin-containing compound metabolism; heme O biosynthesis; heme O from protoheme: step 1/1. Its function is as follows. Converts heme B (protoheme IX) to heme O by substitution of the vinyl group on carbon 2 of heme B porphyrin ring with a hydroxyethyl farnesyl side group. The protein is Protoheme IX farnesyltransferase of Geotalea uraniireducens (strain Rf4) (Geobacter uraniireducens).